We begin with the raw amino-acid sequence, 320 residues long: ATP-dependent 6-phosphofructokinase (320 aa).

Gly-12 lines the ATP pocket. Residues 22–26 (RGVVR) and 55–60 (RYSVSD) contribute to the ADP site. ATP is bound by residues 73-74 (RF) and 103-106 (GDGS). A Mg(2+)-binding site is contributed by Asp-104. 126–128 (TID) provides a ligand contact to substrate. The Proton acceptor role is filled by Asp-128. Residue Arg-155 coordinates ADP. Residues Arg-163 and 170–172 (MGR) contribute to the substrate site. ADP contacts are provided by residues 186–188 (GCE), Lys-212, and 214–216 (KKH). Residues Glu-223, Arg-244, and 250–253 (HIQR) contribute to the substrate site.

Belongs to the phosphofructokinase type A (PFKA) family. ATP-dependent PFK group I subfamily. Prokaryotic clade 'B1' sub-subfamily. Homotetramer. The cofactor is Mg(2+).

The protein localises to the cytoplasm. It carries out the reaction beta-D-fructose 6-phosphate + ATP = beta-D-fructose 1,6-bisphosphate + ADP + H(+). Its pathway is carbohydrate degradation; glycolysis; D-glyceraldehyde 3-phosphate and glycerone phosphate from D-glucose: step 3/4. Its activity is regulated as follows. Allosterically activated by ADP and other diphosphonucleosides, and allosterically inhibited by phosphoenolpyruvate. Catalyzes the phosphorylation of D-fructose 6-phosphate to fructose 1,6-bisphosphate by ATP, the first committing step of glycolysis. The chain is ATP-dependent 6-phosphofructokinase from Klebsiella pneumoniae (strain 342).